A 205-amino-acid chain; its full sequence is Isochorismatase domain-containing protein 2 (205 aa).

This sequence belongs to the isochorismatase family. In terms of assembly, interacts with CDKN2A.

The protein resides in the cytoplasm. The protein localises to the nucleus. The protein is Isochorismatase domain-containing protein 2 (ISOC2) of Macaca fascicularis (Crab-eating macaque).